Here is a 559-residue protein sequence, read N- to C-terminus: Potassium-transporting ATPase potassium-binding subunit (559 aa).

The next 12 membrane-spanning stretches (helical) occupy residues 7–27, 63–83, 132–152, 170–190, 253–273, 283–303, 327–347, 356–376, 379–399, 416–436, 484–504, and 524–544; these read LLIA…GSGL, LLAL…LLFW, GLTV…FALI, LVRI…LFFI, MVQM…FGEA, LLWA…WAEV, FGVL…CGAV, ALGG…FGGV, GLYG…LMIG, MTAL…ALAM, LLAF…MAIA, and GALF…LTFI.

Belongs to the KdpA family. The system is composed of three essential subunits: KdpA, KdpB and KdpC.

Its subcellular location is the cell inner membrane. Functionally, part of the high-affinity ATP-driven potassium transport (or Kdp) system, which catalyzes the hydrolysis of ATP coupled with the electrogenic transport of potassium into the cytoplasm. This subunit binds the periplasmic potassium ions and delivers the ions to the membrane domain of KdpB through an intramembrane tunnel. This Salmonella arizonae (strain ATCC BAA-731 / CDC346-86 / RSK2980) protein is Potassium-transporting ATPase potassium-binding subunit.